The sequence spans 599 residues: Putative clathrin assembly protein At1g03050 (599 aa).

In terms of domain architecture, ENTH spans 26–162 (GRSASLSELD…DFRMQARHGK (137 aa)). 2 disordered regions span residues 332-382 (KQSK…PEEE) and 580-599 (QGHM…TPQY). Acidic residues-rich tracts occupy residues 341–359 (ADED…EQED) and 373–382 (EEDDVKPEEE). Residues 585–599 (LRQNQNQPYSYTPQY) show a composition bias toward polar residues.

It is found in the membrane. The protein resides in the clathrin-coated pit. Its subcellular location is the golgi apparatus. The protein localises to the cytoplasmic vesicle. It localises to the clathrin-coated vesicle. The sequence is that of Putative clathrin assembly protein At1g03050 from Arabidopsis thaliana (Mouse-ear cress).